Consider the following 278-residue polypeptide: Ras-related protein Rab-40B (278 aa).

Residues Ser23, Gly26, and Lys27 each coordinate GTP. The switch-I stretch occupies residues 41 to 49; it reads SPYGHPAGI. Asp69 is a binding site for Mg(2+). Residues Gly72, Asn126, and Arg127 each contribute to the GTP site. The switch-II stretch occupies residues 72–88; it reads GQGRFCTIFRSYSRGAQ. Positions 175-228 constitute an SOCS box domain; that stretch reads LLRHGMDRLWRPSKVLSLQELCCRAVVSCTPGHLVDKLPLPVALRSHLKSFSMA. Positions 245–278 are disordered; it reads ANSSHKRNSFRKVRTIRPPQSPPRNCARNSCKIS. A compositionally biased stretch (basic residues) spans 248–259; that stretch reads SHKRNSFRKVRT. Cys270 is lipidated: S-palmitoyl cysteine. The S-geranylgeranyl cysteine moiety is linked to residue Cys275.

This sequence belongs to the small GTPase superfamily. Rab family. In terms of assembly, component of the cullin-5-RING E3 ubiquitin-protein ligase complex (ECS(RAB40B) complex) composed of CUL5, Elongin BC (ELOB and ELOC), RNF7/RBX2 and RAB40B; RAB40B interaction with ECS complex is GTP-independent. Binds (GTP-bound) LIMA1; interaction promotes LIMA1 subcellular localization in lamellipodia during cell migration. Interacts (GTP-bound) with TKS5/SH3PXD2A (via PX domain); interaction promotes invadopodia-mediated extracellular matrix degradation. Requires Mg(2+) as cofactor.

It localises to the cell membrane. Its subcellular location is the cytoplasm. The protein resides in the cytosol. It is found in the cell projection. The protein localises to the lamellipodium membrane. It localises to the ruffle. The enzyme catalyses GTP + H2O = GDP + phosphate + H(+). Its pathway is protein modification; protein ubiquitination. Regulated by guanine nucleotide exchange factors (GEFs) which promote the exchange of bound GDP for free GTP. Regulated by GTPase activating proteins (GAPs) which increase the GTP hydrolysis activity. Inhibited by GDP dissociation inhibitors (GDIs). Functionally, RAB40B small GTPase acts as substrate-recognition components of the ECS(RAB40B) E3 ubiquitin ligase complex which mediates the ubiquitination of target proteins. The Rab40 subfamily belongs to the Rab family that are key regulators of intracellular membrane trafficking, from the formation of transport vesicles to their fusion with membranes. Rabs cycle between an inactive GDP-bound form and an active GTP-bound form that is able to recruit to membranes different sets of downstream effectors directly responsible for vesicle formation, movement, tethering and fusion. As part of the ECS(RAB40B) complex, GTP-bound RAB40B promotes LIMA1/EPLIN ubiquitination and degradation, thereby regulating leading-edge actin dynamics during cell migration. As part of the ECS(RAB40B) complex, GTP-bound RAB40B also ubiquitinates RAP2A GTPase which promotes its localization to lamellipodia and activation to drive cell migration. The ECS(RAB40B) complex does not mediate canonical ubiquitin-dependent degradation of RAP2. RAB40B also binds TKS5/SH3PXD2A effector independently from ECS complex to promote invadopodia-mediated extracellular matrix degradation. This chain is Ras-related protein Rab-40B, found in Mus musculus (Mouse).